The primary structure comprises 324 residues: Ribosomal RNA small subunit methyltransferase H (324 aa).

S-adenosyl-L-methionine-binding positions include 47 to 49 (GGH), aspartate 67, leucine 96, aspartate 115, and glutamine 122.

Belongs to the methyltransferase superfamily. RsmH family.

It localises to the cytoplasm. The enzyme catalyses cytidine(1402) in 16S rRNA + S-adenosyl-L-methionine = N(4)-methylcytidine(1402) in 16S rRNA + S-adenosyl-L-homocysteine + H(+). Its function is as follows. Specifically methylates the N4 position of cytidine in position 1402 (C1402) of 16S rRNA. In Halorhodospira halophila (strain DSM 244 / SL1) (Ectothiorhodospira halophila (strain DSM 244 / SL1)), this protein is Ribosomal RNA small subunit methyltransferase H.